Here is a 370-residue protein sequence, read N- to C-terminus: Flagellar P-ring protein (370 aa).

The N-terminal stretch at 1–28 (MTFFTRCFRRGALLFLLAVLLLPSPAQA) is a signal peptide.

It belongs to the FlgI family. As to quaternary structure, the basal body constitutes a major portion of the flagellar organelle and consists of four rings (L,P,S, and M) mounted on a central rod.

The protein localises to the periplasm. It is found in the bacterial flagellum basal body. In terms of biological role, assembles around the rod to form the L-ring and probably protects the motor/basal body from shearing forces during rotation. In Oleidesulfovibrio alaskensis (strain ATCC BAA-1058 / DSM 17464 / G20) (Desulfovibrio alaskensis), this protein is Flagellar P-ring protein.